A 406-amino-acid chain; its full sequence is MYTIHFYVLFVLLTVRCSSSFIGNGENYRRNLSLELNPGLNSSLMPLPPGVGLLHVRALGKNNTLHYLLCSQGAPALLLVHTNSTSSKVKVDWPAFLVQNTTGSLKLTPESSVLYSNTLVFTRLWEYDDVNDTAVPEHLPPSSFFQPYELQNFTWDDLNKTLDPMAYTALLCGRDASESFSNGSLCLKFSAFDVEGRDQGWPSLLHNANSSQLRVVLDGVVPRSNRSRFSLELQVVGGTQSMSRVDVLRSIDDEYTPSIFKVSQWVSSPVNSTSPVLGYAQWKPVAYRRPSPVFEDATPCRHSTPVPIAQLPPSGLVLAYYGGESQTTGLNMTFSITGDPFYNTTNYLSWTVLVGLGSPPVDSFSPLVLVIMAVGLGTPMLIILLGGVCVCVRKNRPQPQVYEPIN.

The N-terminal stretch at 1–20 (MYTIHFYVLFVLLTVRCSSS) is a signal peptide. The Lumenal segment spans residues 21 to 367 (FIGNGENYRR…SPPVDSFSPL (347 aa)). 14 N-linked (GlcNAc...) asparagine glycosylation sites follow: N31, N41, N62, N83, N100, N131, N152, N159, N182, N209, N225, N271, N331, and N343. A helical membrane pass occupies residues 368 to 388 (VLVIMAVGLGTPMLIILLGGV). At 389-406 (CVCVRKNRPQPQVYEPIN) the chain is on the cytoplasmic side. The Lysosomal targeting motif motif lies at 402–406 (YEPIN).

Belongs to the GLMP family. In terms of assembly, interacts (via lumenal domain) with lysosomal protein MFSD1; the interaction starts while both proteins are still in the endoplasmic reticulum and is required for stabilization of MFSD1 in lysosomes but has no direct effect on its targeting to lysosomes or transporter activity.

The protein localises to the lysosome membrane. Required to protect lysosomal transporter MFSD1 from lysosomal proteolysis and for MFSD1 lysosomal localization. In Salmo salar (Atlantic salmon), this protein is Glycosylated lysosomal membrane protein (glmp).